A 437-amino-acid polypeptide reads, in one-letter code: GTPase Der (437 aa).

EngA-type G domains are found at residues 3–168 and 178–353; these read PLIA…PVQE and TNLA…ENRS. GTP contacts are provided by residues 9-16, 56-60, 120-123, 184-191, 231-235, and 296-299; these read GRPNVGKS, DTGGY, NKVE, DTAGL, and NKWD. The 84-residue stretch at 354 to 437 folds into the KH-like domain; it reads RKITTSALNR…VTVSLRFFKK (84 aa).

It belongs to the TRAFAC class TrmE-Era-EngA-EngB-Septin-like GTPase superfamily. EngA (Der) GTPase family. In terms of assembly, associates with the 50S ribosomal subunit.

Functionally, GTPase that plays an essential role in the late steps of ribosome biogenesis. In Chlorobium phaeobacteroides (strain DSM 266 / SMG 266 / 2430), this protein is GTPase Der.